A 302-amino-acid chain; its full sequence is Sulfate adenylyltransferase subunit 2 (302 aa).

This sequence belongs to the PAPS reductase family. CysD subfamily. Heterodimer composed of CysD, the smaller subunit, and CysN.

The enzyme catalyses sulfate + ATP + H(+) = adenosine 5'-phosphosulfate + diphosphate. It functions in the pathway sulfur metabolism; hydrogen sulfide biosynthesis; sulfite from sulfate: step 1/3. In terms of biological role, with CysN forms the ATP sulfurylase (ATPS) that catalyzes the adenylation of sulfate producing adenosine 5'-phosphosulfate (APS) and diphosphate, the first enzymatic step in sulfur assimilation pathway. APS synthesis involves the formation of a high-energy phosphoric-sulfuric acid anhydride bond driven by GTP hydrolysis by CysN coupled to ATP hydrolysis by CysD. This chain is Sulfate adenylyltransferase subunit 2, found in Salmonella arizonae (strain ATCC BAA-731 / CDC346-86 / RSK2980).